A 748-amino-acid polypeptide reads, in one-letter code: Phosphoenolpyruvate-dependent phosphotransferase system (748 aa).

Residues 1–127 (MLTRLREIVE…RRQLLGVLVV (127 aa)) form the GAF domain. The tract at residues 128–170 (QQRELRQYDESEESFLVTLATQMAAILSQSQVTALFGQYRQTR) is linker. The tract at residues 171-748 (IRALPAAPGV…GMGGLIRGGL (578 aa)) is PTS EI. H356 functions as the Tele-phosphohistidine intermediate in the catalytic mechanism. 2 residues coordinate phosphoenolpyruvate: R462 and R498. The Mg(2+) site is built by E597 and D621. Phosphoenolpyruvate-binding positions include 620-621 (ND) and R631. The active-site Proton donor is the C668.

It belongs to the PEP-utilizing enzyme family. Requires Mg(2+) as cofactor.

The protein resides in the cytoplasm. The enzyme catalyses L-histidyl-[protein] + phosphoenolpyruvate = N(pros)-phospho-L-histidyl-[protein] + pyruvate. In terms of biological role, component of the phosphoenolpyruvate-dependent nitrogen-metabolic phosphotransferase system (nitrogen-metabolic PTS), that seems to be involved in regulating nitrogen metabolism. Enzyme I-Ntr transfers the phosphoryl group from phosphoenolpyruvate (PEP) to the phosphoryl carrier protein (NPr). Could function in the transcriptional regulation of sigma-54 dependent operons in conjunction with the NPr (PtsO) and EIIA-Ntr (PtsN) proteins. Enzyme I-Ntr is specific for NPr. The polypeptide is Phosphoenolpyruvate-dependent phosphotransferase system (ptsP) (Salmonella typhimurium (strain LT2 / SGSC1412 / ATCC 700720)).